The primary structure comprises 289 residues: Acetyl-coenzyme A carboxylase carboxyl transferase subunit beta (289 aa).

The region spanning 28-289 (VMTKCPKCKK…QGGEMAVWQS (262 aa)) is the CoA carboxyltransferase N-terminal domain. Zn(2+) contacts are provided by C32, C35, C51, and C54. The segment at 32 to 54 (CPKCKKIMYTKEVLKNLKVCVNC) adopts a C4-type zinc-finger fold.

The protein belongs to the AccD/PCCB family. As to quaternary structure, acetyl-CoA carboxylase is a heterohexamer composed of biotin carboxyl carrier protein (AccB), biotin carboxylase (AccC) and two subunits each of ACCase subunit alpha (AccA) and ACCase subunit beta (AccD). It depends on Zn(2+) as a cofactor.

The protein resides in the cytoplasm. The catalysed reaction is N(6)-carboxybiotinyl-L-lysyl-[protein] + acetyl-CoA = N(6)-biotinyl-L-lysyl-[protein] + malonyl-CoA. The protein operates within lipid metabolism; malonyl-CoA biosynthesis; malonyl-CoA from acetyl-CoA: step 1/1. In terms of biological role, component of the acetyl coenzyme A carboxylase (ACC) complex. Biotin carboxylase (BC) catalyzes the carboxylation of biotin on its carrier protein (BCCP) and then the CO(2) group is transferred by the transcarboxylase to acetyl-CoA to form malonyl-CoA. The polypeptide is Acetyl-coenzyme A carboxylase carboxyl transferase subunit beta (Bacillus thuringiensis (strain Al Hakam)).